Reading from the N-terminus, the 252-residue chain is Phosphate import ATP-binding protein PstB (252 aa).

An ABC transporter domain is found at 6 to 247 (IEVKNLNTYF…PKNKQTENYI (242 aa)). 38–45 (GPSGCGKS) is an ATP binding site.

It belongs to the ABC transporter superfamily. Phosphate importer (TC 3.A.1.7) family. The complex is composed of two ATP-binding proteins (PstB), two transmembrane proteins (PstC and PstA) and a solute-binding protein (PstS).

Its subcellular location is the cell membrane. It catalyses the reaction phosphate(out) + ATP + H2O = ADP + 2 phosphate(in) + H(+). In terms of biological role, part of the ABC transporter complex PstSACB involved in phosphate import. Responsible for energy coupling to the transport system. The sequence is that of Phosphate import ATP-binding protein PstB from Methanosphaera stadtmanae (strain ATCC 43021 / DSM 3091 / JCM 11832 / MCB-3).